Here is a 227-residue protein sequence, read N- to C-terminus: 7-cyano-7-deazaguanine synthase (227 aa).

Residue 7–17 (VSGGMDSLVAT) participates in ATP binding. Residues cysteine 187, cysteine 195, cysteine 198, and cysteine 201 each contribute to the Zn(2+) site.

This sequence belongs to the QueC family. Requires Zn(2+) as cofactor.

It carries out the reaction 7-carboxy-7-deazaguanine + NH4(+) + ATP = 7-cyano-7-deazaguanine + ADP + phosphate + H2O + H(+). The protein operates within purine metabolism; 7-cyano-7-deazaguanine biosynthesis. Functionally, catalyzes the ATP-dependent conversion of 7-carboxy-7-deazaguanine (CDG) to 7-cyano-7-deazaguanine (preQ(0)). This is 7-cyano-7-deazaguanine synthase from Chlorobaculum tepidum (strain ATCC 49652 / DSM 12025 / NBRC 103806 / TLS) (Chlorobium tepidum).